Here is a 504-residue protein sequence, read N- to C-terminus: Glycerol kinase (504 aa).

An ADP-binding site is contributed by threonine 12. Residues threonine 12, threonine 13, and serine 14 each contribute to the ATP site. Threonine 12 contributes to the sn-glycerol 3-phosphate binding site. Arginine 16 provides a ligand contact to ADP. The sn-glycerol 3-phosphate site is built by arginine 82, glutamate 83, tyrosine 134, and aspartate 249. Residues arginine 82, glutamate 83, tyrosine 134, aspartate 249, and glutamine 250 each coordinate glycerol. Residues threonine 271 and glycine 315 each coordinate ADP. 4 residues coordinate ATP: threonine 271, glycine 315, glutamine 319, and glycine 416. Residues glycine 416 and asparagine 420 each coordinate ADP.

It belongs to the FGGY kinase family.

It catalyses the reaction glycerol + ATP = sn-glycerol 3-phosphate + ADP + H(+). The protein operates within polyol metabolism; glycerol degradation via glycerol kinase pathway; sn-glycerol 3-phosphate from glycerol: step 1/1. Inhibited by fructose 1,6-bisphosphate (FBP). Key enzyme in the regulation of glycerol uptake and metabolism. Catalyzes the phosphorylation of glycerol to yield sn-glycerol 3-phosphate. The sequence is that of Glycerol kinase from Mycobacteroides abscessus (strain ATCC 19977 / DSM 44196 / CCUG 20993 / CIP 104536 / JCM 13569 / NCTC 13031 / TMC 1543 / L948) (Mycobacterium abscessus).